Reading from the N-terminus, the 417-residue chain is UDP-N-acetylglucosamine 1-carboxyvinyltransferase (417 aa).

Phosphoenolpyruvate is bound at residue 23–24 (KN). Arg-93 contacts UDP-N-acetyl-alpha-D-glucosamine. Catalysis depends on Asp-117, which acts as the Proton donor. The UDP-N-acetyl-alpha-D-glucosamine site is built by Asp-305 and Val-327.

This sequence belongs to the EPSP synthase family. MurA subfamily.

It localises to the cytoplasm. It carries out the reaction phosphoenolpyruvate + UDP-N-acetyl-alpha-D-glucosamine = UDP-N-acetyl-3-O-(1-carboxyvinyl)-alpha-D-glucosamine + phosphate. The protein operates within cell wall biogenesis; peptidoglycan biosynthesis. Functionally, cell wall formation. Adds enolpyruvyl to UDP-N-acetylglucosamine. The polypeptide is UDP-N-acetylglucosamine 1-carboxyvinyltransferase (Mycolicibacterium paratuberculosis (strain ATCC BAA-968 / K-10) (Mycobacterium paratuberculosis)).